The chain runs to 299 residues: Acetyl-hydrolase (299 aa).

Residues 73 to 75 (HGG) carry the Involved in the stabilization of the negatively charged intermediate by the formation of the oxyanion hole motif. Active-site residues include Ser-143, Glu-237, and His-267.

Belongs to the 'GDXG' lipolytic enzyme family.

The protein operates within secondary metabolite biosynthesis; bialaphos biosynthesis. This protein removes the N-acetyl group from bialaphos as one of the final steps of biosynthesis of phosphinothricin tripeptide (PTT), also known as bialaphos (BA), a natural-product antibiotic and potent herbicide. In Streptomyces hygroscopicus, this protein is Acetyl-hydrolase (bah).